The chain runs to 299 residues: Protease HtpX homolog (299 aa).

The next 2 helical transmembrane spans lie at 14-34 and 39-59; these read WLLLLVFFLLLGLVGYGVGYL and GFGGMILALVIGFIYAVTMIF. Residue His-143 coordinates Zn(2+). Glu-144 is a catalytic residue. Residue His-147 participates in Zn(2+) binding. 2 helical membrane-spanning segments follow: residues 153-173 and 198-218; these read IRISTIAVALASAITMLAVMA and IILLIISLIAIILAPLAATLV. Glu-227 is a binding site for Zn(2+).

This sequence belongs to the peptidase M48B family. It depends on Zn(2+) as a cofactor.

It is found in the cell membrane. The chain is Protease HtpX homolog from Streptococcus thermophilus (strain CNRZ 1066).